Reading from the N-terminus, the 671-residue chain is Gametogenetin-binding protein 2-like (671 aa).

Disordered regions lie at residues 372 to 489 and 532 to 562; these read REQK…ARVQ and VRDS…SEVS. Residues 373–384 show a composition bias toward basic residues; that stretch reads EQKKLKKKKKKD. The span at 385-395 shows a compositional bias: basic and acidic residues; it reads EKKNLLHRQCD. The span at 396–420 shows a compositional bias: acidic residues; sequence DTEANESDEEEEELRNEELDLEEES. Basic residues predominate over residues 455-472; the sequence is TKSKPKKQSKKKKQKKAA. Composition is skewed to polar residues over residues 476–486 and 546–557; these read MGNQKQMQATA and GSRTSSAISSPE.

In Drosophila melanogaster (Fruit fly), this protein is Gametogenetin-binding protein 2-like.